Here is a 288-residue protein sequence, read N- to C-terminus: N(1)-aminopropylagmatine ureohydrolase (288 aa).

Mn(2+) is bound by residues histidine 114, aspartate 133, histidine 135, aspartate 137, aspartate 213, and aspartate 215.

The protein belongs to the arginase family. It depends on Mn(2+) as a cofactor.

It is found in the cytoplasm. It catalyses the reaction N(1)-(3-aminopropyl)agmatine + H2O = urea + spermidine. The enzyme catalyses agmatine + H2O = urea + putrescine. Its pathway is amine and polyamine biosynthesis; spermidine biosynthesis. In terms of biological role, involved in the biosynthesis of polyamines which are thought to support the growth of thermophilic microorganisms under high-temperature conditions. It seems that long-chain and branched-chain of polyamines effectively stabilize DNA and RNA, respectively. Catalyzes the decarboxylation of N1-(3-aminopropyl)agmatine to yield spermidine and urea. It can also use agmatine to yield putrescine. This is N(1)-aminopropylagmatine ureohydrolase from Thermococcus kodakarensis (strain ATCC BAA-918 / JCM 12380 / KOD1) (Pyrococcus kodakaraensis (strain KOD1)).